A 424-amino-acid chain; its full sequence is Glutamyl-tRNA reductase (424 aa).

Residues 51 to 54 (TCNR), Ser-99, 104 to 106 (EDQ), and Gln-110 contribute to the substrate site. Catalysis depends on Cys-52, which acts as the Nucleophile. 179–184 (GTGEMG) contributes to the NADP(+) binding site.

Belongs to the glutamyl-tRNA reductase family. In terms of assembly, homodimer.

It catalyses the reaction (S)-4-amino-5-oxopentanoate + tRNA(Glu) + NADP(+) = L-glutamyl-tRNA(Glu) + NADPH + H(+). Its pathway is porphyrin-containing compound metabolism; protoporphyrin-IX biosynthesis; 5-aminolevulinate from L-glutamyl-tRNA(Glu): step 1/2. Functionally, catalyzes the NADPH-dependent reduction of glutamyl-tRNA(Glu) to glutamate 1-semialdehyde (GSA). The protein is Glutamyl-tRNA reductase of Methanospirillum hungatei JF-1 (strain ATCC 27890 / DSM 864 / NBRC 100397 / JF-1).